The chain runs to 663 residues: 4-hydroxy-3-methylbut-2-en-1-yl diphosphate synthase (flavodoxin) (663 aa).

Residues Cys-568, Cys-571, Cys-602, and Glu-609 each contribute to the [4Fe-4S] cluster site.

The protein belongs to the IspG family. It depends on [4Fe-4S] cluster as a cofactor.

The enzyme catalyses (2E)-4-hydroxy-3-methylbut-2-enyl diphosphate + oxidized [flavodoxin] + H2O + 2 H(+) = 2-C-methyl-D-erythritol 2,4-cyclic diphosphate + reduced [flavodoxin]. Its pathway is isoprenoid biosynthesis; isopentenyl diphosphate biosynthesis via DXP pathway; isopentenyl diphosphate from 1-deoxy-D-xylulose 5-phosphate: step 5/6. Functionally, converts 2C-methyl-D-erythritol 2,4-cyclodiphosphate (ME-2,4cPP) into 1-hydroxy-2-methyl-2-(E)-butenyl 4-diphosphate. The protein is 4-hydroxy-3-methylbut-2-en-1-yl diphosphate synthase (flavodoxin) of Leptospira borgpetersenii serovar Hardjo-bovis (strain JB197).